The primary structure comprises 287 residues: Ketoacyl reductase HetN (287 aa).

Residue 11-35 coordinates NAD(+); that stretch reads LTGASRGLGVYIARALAKEQATVVC. Residue Ser142 coordinates substrate. The active-site Proton acceptor is Tyr155.

Belongs to the short-chain dehydrogenases/reductases (SDR) family.

May be involved in repressing heterocyst differentiation and may be essential for preventing all vegetative cells from differentiating. This chain is Ketoacyl reductase HetN (hetN), found in Nostoc sp. (strain PCC 7120 / SAG 25.82 / UTEX 2576).